A 475-amino-acid polypeptide reads, in one-letter code: MAAGPLRGLAVAGGGESSDSEDDGWEIGYLDRKSQKLKGPLPVEERQETFKKALTTGNISLVEELLDSGISVDTSFQYGWTSLMYAASVSNVELVRVLLDRGANASFDKDKQTVLITACSARGSEEKILKCIELLLSRNADPNVACRRLMTPIMYAARDGHPQVVALLVAHGAEVNTQDENGYTALTWAARQGHKNVVLKLLELGANKMIQTKDGKTPSEIAKRNKHLEIFNFLSLTLNPLEGKLHQLTKEESICKLLRTDSDKEKDHIFSSYTAFGDLEIFLHGLGLEHMTDLLKEREITLRHLLTMRKDELAKNGITSRDQQKIMAALKELEVEEIKFGELPEVAKLEISGDEFLNFLLKLNKQCGHLITAVQNIITELPVNSHKIVLEWASPRNFTSVCEELVSNVEDLSEEVCKLKDLIQKLQNERENDPTHIPLMEEVSTWNSRILKRTAITVCGFGFLLFICKLAFQRK.

The tract at residues 1–25 (MAAGPLRGLAVAGGGESSDSEDDGW) is disordered. 3 positions are modified to phosphoserine: serine 17, serine 18, and serine 20. ANK repeat units follow at residues 45–74 (ERQETFKKALTTGNISLVEELLDSGISVDT), 78–107 (YGWTSLMYAASVSNVELVRVLLDRGANASF), 110–144 (DKQTVLITACSARGSEEKILKCIELLLSRNADPNV), 148–177 (RLMTPIMYAARDGHPQVVALLVAHGAEVNT), 181–210 (NGYTALTWAARQGHKNVVLKLLELGANKMI), and 214–243 (DGKTPSEIAKRNKHLEIFNFLSLTLNPLEG). The region spanning 272–334 (SYTAFGDLEI…KIMAALKELE (63 aa)) is the SAM domain.

In terms of assembly, interacts with DDX4, PIWIL1, RANBP9 and TDRD1.

It is found in the cytoplasm. In terms of biological role, plays a central role during spermatogenesis by repressing transposable elements and preventing their mobilization, which is essential for the germline integrity. Acts via the piRNA metabolic process, which mediates the repression of transposable elements during meiosis by forming complexes composed of piRNAs and Piwi proteins and governs the methylation and subsequent repression of transposons. Its association with pi-bodies suggests a participation in the primary piRNAs metabolic process. Required prior to the pachytene stage to facilitate the production of multiple types of piRNAs, including those associated with repeats involved in the regulation of retrotransposons. May act by mediating protein-protein interactions during germ cell maturation. This is Ankyrin repeat, SAM and basic leucine zipper domain-containing protein 1 (ASZ1) from Bos taurus (Bovine).